We begin with the raw amino-acid sequence, 27 residues long: Cupiennin-3c (27 aa).

In terms of tissue distribution, expressed by the venom gland.

Its subcellular location is the secreted. The chain is Cupiennin-3c from Cupiennius salei (American wandering spider).